A 303-amino-acid chain; its full sequence is N-acetyl-D-glucosamine kinase (303 aa).

ATP-binding positions include 4 to 11 and 133 to 140; these read GFDIGGTK and GVGGGLVL. Zn(2+) contacts are provided by His-157, Cys-177, Cys-179, and Cys-184.

It belongs to the ROK (NagC/XylR) family. NagK subfamily.

The enzyme catalyses N-acetyl-D-glucosamine + ATP = N-acetyl-D-glucosamine 6-phosphate + ADP + H(+). It participates in cell wall biogenesis; peptidoglycan recycling. In terms of biological role, catalyzes the phosphorylation of N-acetyl-D-glucosamine (GlcNAc) derived from cell-wall degradation, yielding GlcNAc-6-P. This is N-acetyl-D-glucosamine kinase from Salmonella paratyphi A (strain ATCC 9150 / SARB42).